The primary structure comprises 540 residues: SNW/SKI-interacting protein B (540 aa).

Disordered stretches follow at residues 1–106 (MVLR…SLTV), 215–273 (GETQ…NPKG), 351–402 (GAAP…RDRD), and 502–526 (ASVAAGKRERPVEFDGPEMEEDPFH). 2 stretches are compositionally biased toward basic and acidic residues: residues 16–29 (PHDHTEDEWFKERY) and 83–94 (MGRRGGDGDGEQ). Residues 189–353 (PEFIKYTPAR…KARAEMLGAA (165 aa)) form an SNW region. Positions 236–251 (AGSPPVPVLRSPPRPP) are enriched in pro residues. Positions 359–382 (ERSKAAAERDAIREERRRERRLEA) are enriched in basic and acidic residues. The segment covering 383-393 (RAAAAAASKKS) has biased composition (low complexity).

Belongs to the SNW family.

It localises to the nucleus. The protein is SNW/SKI-interacting protein B of Oryza sativa subsp. japonica (Rice).